Here is a 157-residue protein sequence, read N- to C-terminus: 2-C-methyl-D-erythritol 2,4-cyclodiphosphate synthase (157 aa).

A divalent metal cation is bound by residues D9 and H11. Residues 9–11 (DVH) and 35–36 (HS) each bind 4-CDP-2-C-methyl-D-erythritol 2-phosphate. Position 43 (H43) interacts with a divalent metal cation. 4-CDP-2-C-methyl-D-erythritol 2-phosphate contacts are provided by residues 57–59 (DIG), 62–66 (FPDTD), 101–107 (AEKPKMA), 133–136 (TTTE), F140, and R143.

This sequence belongs to the IspF family. In terms of assembly, homotrimer. It depends on a divalent metal cation as a cofactor.

It catalyses the reaction 4-CDP-2-C-methyl-D-erythritol 2-phosphate = 2-C-methyl-D-erythritol 2,4-cyclic diphosphate + CMP. It functions in the pathway isoprenoid biosynthesis; isopentenyl diphosphate biosynthesis via DXP pathway; isopentenyl diphosphate from 1-deoxy-D-xylulose 5-phosphate: step 4/6. Involved in the biosynthesis of isopentenyl diphosphate (IPP) and dimethylallyl diphosphate (DMAPP), two major building blocks of isoprenoid compounds. Catalyzes the conversion of 4-diphosphocytidyl-2-C-methyl-D-erythritol 2-phosphate (CDP-ME2P) to 2-C-methyl-D-erythritol 2,4-cyclodiphosphate (ME-CPP) with a corresponding release of cytidine 5-monophosphate (CMP). This is 2-C-methyl-D-erythritol 2,4-cyclodiphosphate synthase from Listeria monocytogenes serotype 4b (strain F2365).